The sequence spans 78 residues: Large ribosomal subunit protein bL28 (78 aa).

The protein belongs to the bacterial ribosomal protein bL28 family.

The chain is Large ribosomal subunit protein bL28 from Prochlorococcus marinus (strain AS9601).